The primary structure comprises 269 residues: Tryptophan synthase alpha chain (269 aa).

Active-site proton acceptor residues include Glu49 and Asp60.

It belongs to the TrpA family. As to quaternary structure, tetramer of two alpha and two beta chains.

It carries out the reaction (1S,2R)-1-C-(indol-3-yl)glycerol 3-phosphate + L-serine = D-glyceraldehyde 3-phosphate + L-tryptophan + H2O. It participates in amino-acid biosynthesis; L-tryptophan biosynthesis; L-tryptophan from chorismate: step 5/5. In terms of biological role, the alpha subunit is responsible for the aldol cleavage of indoleglycerol phosphate to indole and glyceraldehyde 3-phosphate. The chain is Tryptophan synthase alpha chain from Pseudomonas putida (strain ATCC 47054 / DSM 6125 / CFBP 8728 / NCIMB 11950 / KT2440).